The sequence spans 93 residues: Chromosomal protein MC1 (93 aa).

Positions 1–43 (SNTRNFVLRDEEGNEHGVFTGKQPRQAALKAANRGDGTKSNPD) are disordered.

In terms of biological role, protects DNA against thermal denaturation and modulates transcription. This Methanosarcina barkeri protein is Chromosomal protein MC1.